The sequence spans 205 residues: Recombination protein RecR (205 aa).

Residues 60-75 form a C4-type zinc finger; that stretch reads CKVCHNISDTETCQIC. A Toprim domain is found at 83–178; it reads SMVCVVENIR…KLSVLARGVS (96 aa).

The protein belongs to the RecR family.

Its function is as follows. May play a role in DNA repair. It seems to be involved in an RecBC-independent recombinational process of DNA repair. It may act with RecF and RecO. The protein is Recombination protein RecR of Bacteroides fragilis (strain ATCC 25285 / DSM 2151 / CCUG 4856 / JCM 11019 / LMG 10263 / NCTC 9343 / Onslow / VPI 2553 / EN-2).